A 319-amino-acid chain; its full sequence is Phosphate acyltransferase (319 aa).

It belongs to the PlsX family. Homodimer. Probably interacts with PlsY.

It localises to the cytoplasm. It catalyses the reaction a fatty acyl-[ACP] + phosphate = an acyl phosphate + holo-[ACP]. The protein operates within lipid metabolism; phospholipid metabolism. In terms of biological role, catalyzes the reversible formation of acyl-phosphate (acyl-PO(4)) from acyl-[acyl-carrier-protein] (acyl-ACP). This enzyme utilizes acyl-ACP as fatty acyl donor, but not acyl-CoA. The chain is Phosphate acyltransferase from Chlamydia muridarum (strain MoPn / Nigg).